A 387-amino-acid polypeptide reads, in one-letter code: Exodeoxyribonuclease 7 large subunit (387 aa).

Belongs to the XseA family. In terms of assembly, heterooligomer composed of large and small subunits.

Its subcellular location is the cytoplasm. The enzyme catalyses Exonucleolytic cleavage in either 5'- to 3'- or 3'- to 5'-direction to yield nucleoside 5'-phosphates.. Its function is as follows. Bidirectionally degrades single-stranded DNA into large acid-insoluble oligonucleotides, which are then degraded further into small acid-soluble oligonucleotides. The polypeptide is Exodeoxyribonuclease 7 large subunit (Campylobacter fetus subsp. fetus (strain 82-40)).